The sequence spans 124 residues: Nucleoid-associated protein Noca_0318 (124 aa).

This sequence belongs to the YbaB/EbfC family. In terms of assembly, homodimer.

It is found in the cytoplasm. Its subcellular location is the nucleoid. Functionally, binds to DNA and alters its conformation. May be involved in regulation of gene expression, nucleoid organization and DNA protection. The polypeptide is Nucleoid-associated protein Noca_0318 (Nocardioides sp. (strain ATCC BAA-499 / JS614)).